The following is a 543-amino-acid chain: Splicing factor U2af large subunit B (543 aa).

Residues 1–10 (MADDNGGGGD) show a composition bias toward gly residues. The segment at 1–171 (MADDNGGGGD…IPTPSQLPGS (171 aa)) is disordered. Basic and acidic residues-rich tracts occupy residues 17 to 78 (VRPE…DRDR) and 88 to 114 (EHRD…ERDG). Positions 115–126 (HRRHRSRSRSRS) are enriched in basic residues. RRM domains follow at residues 207 to 290 (RRVY…RPTD), 327 to 405 (DRIF…RANQ), and 446 to 532 (QVVT…YPEN).

Belongs to the splicing factor SR family.

Its subcellular location is the nucleus. In terms of biological role, necessary for the splicing of pre-mRNA. The sequence is that of Splicing factor U2af large subunit B (U2AF65B) from Triticum aestivum (Wheat).